A 227-amino-acid chain; its full sequence is Tegument protein ORF55 (227 aa).

The S-palmitoyl cysteine; by host moiety is linked to residue C11. The disordered stretch occupies residues 183–227; the sequence is VTRQPEATLPKPPTEDPSVSAMHSSIPPRPSSTLEETTESAIGST. Polar residues predominate over residues 213-227; the sequence is SSTLEETTESAIGST.

The protein belongs to the herpesviridae UL51 family. In terms of assembly, oligomerizes. Interacts with ORF42; this interaction mediates ORF42 incorporation to virions. Interacts with vBCL2. In terms of processing, phosphorylated. Palmitoylation is necessary for Golgi localization.

The protein resides in the virion tegument. Its subcellular location is the host cytoplasm. It localises to the host Golgi apparatus. Its function is as follows. Plays several roles during the time course of infection, including egress of virus particles from the perinuclear space and secondary envelopment of cytoplasmic capsids that bud into specific trans-Golgi network (TGN)-derived membranes. This Homo sapiens (Human) protein is Tegument protein ORF55 (ORF55).